Reading from the N-terminus, the 419-residue chain is Tryptophan synthase beta chain (419 aa).

An N6-(pyridoxal phosphate)lysine modification is found at K86. Residues 394–403 (VEQQKVEQQK) are compositionally biased toward basic and acidic residues. The disordered stretch occupies residues 394 to 419 (VEQQKVEQQKADNQNTEKNNQESGNE). The span at 404–419 (ADNQNTEKNNQESGNE) shows a compositional bias: polar residues.

It belongs to the TrpB family. Tetramer of two alpha and two beta chains. Pyridoxal 5'-phosphate serves as cofactor.

It carries out the reaction (1S,2R)-1-C-(indol-3-yl)glycerol 3-phosphate + L-serine = D-glyceraldehyde 3-phosphate + L-tryptophan + H2O. It participates in amino-acid biosynthesis; L-tryptophan biosynthesis; L-tryptophan from chorismate: step 5/5. The beta subunit is responsible for the synthesis of L-tryptophan from indole and L-serine. The protein is Tryptophan synthase beta chain of Shewanella halifaxensis (strain HAW-EB4).